Consider the following 466-residue polypeptide: tRNA-2-methylthio-N(6)-dimethylallyladenosine synthase (466 aa).

The MTTase N-terminal domain occupies 2–118; that stretch reads KRFYIHTIGC…LPGHIQAVAH (117 aa). Positions 11, 47, 81, 157, 161, and 164 each coordinate [4Fe-4S] cluster. The 230-residue stretch at 143–372 folds into the Radical SAM core domain; that stretch reads DSSGVTGFIT…LELQNRITAE (230 aa). In terms of domain architecture, TRAM spans 375–453; it reads RALEGRVEQV…AHSLSGIAVG (79 aa).

The protein belongs to the methylthiotransferase family. MiaB subfamily. In terms of assembly, monomer. It depends on [4Fe-4S] cluster as a cofactor.

Its subcellular location is the cytoplasm. The catalysed reaction is N(6)-dimethylallyladenosine(37) in tRNA + (sulfur carrier)-SH + AH2 + 2 S-adenosyl-L-methionine = 2-methylsulfanyl-N(6)-dimethylallyladenosine(37) in tRNA + (sulfur carrier)-H + 5'-deoxyadenosine + L-methionine + A + S-adenosyl-L-homocysteine + 2 H(+). Catalyzes the methylthiolation of N6-(dimethylallyl)adenosine (i(6)A), leading to the formation of 2-methylthio-N6-(dimethylallyl)adenosine (ms(2)i(6)A) at position 37 in tRNAs that read codons beginning with uridine. The polypeptide is tRNA-2-methylthio-N(6)-dimethylallyladenosine synthase (Desulfosudis oleivorans (strain DSM 6200 / JCM 39069 / Hxd3) (Desulfococcus oleovorans)).